The chain runs to 291 residues: Putative GATA transcription factor 13 (291 aa).

Residues lysine 187 to proline 241 form a GATA-type zinc finger. The interval threonine 271 to glutamine 291 is disordered.

It belongs to the type IV zinc-finger family. Class A subfamily.

The protein resides in the nucleus. Transcriptional activator that specifically binds 5'-GATA-3' or 5'-GAT-3' motifs within gene promoters. May be involved in the regulation of some light-responsive genes. In Arabidopsis thaliana (Mouse-ear cress), this protein is Putative GATA transcription factor 13 (GATA13).